Consider the following 151-residue polypeptide: Large ribosomal subunit protein bL9 (151 aa).

It belongs to the bacterial ribosomal protein bL9 family.

Its function is as follows. Binds to the 23S rRNA. This Thermosipho melanesiensis (strain DSM 12029 / CIP 104789 / BI429) protein is Large ribosomal subunit protein bL9.